A 78-amino-acid polypeptide reads, in one-letter code: Acyl carrier protein (78 aa).

The Carrier domain maps to 2–77 (SEIASRVKAI…DAVSYIEANA (76 aa)). Serine 37 bears the O-(pantetheine 4'-phosphoryl)serine mark.

Belongs to the acyl carrier protein (ACP) family. 4'-phosphopantetheine is transferred from CoA to a specific serine of apo-ACP by AcpS. This modification is essential for activity because fatty acids are bound in thioester linkage to the sulfhydryl of the prosthetic group.

It localises to the cytoplasm. Its pathway is lipid metabolism; fatty acid biosynthesis. Its function is as follows. Carrier of the growing fatty acid chain in fatty acid biosynthesis. In Phocaeicola vulgatus (strain ATCC 8482 / DSM 1447 / JCM 5826 / CCUG 4940 / NBRC 14291 / NCTC 11154) (Bacteroides vulgatus), this protein is Acyl carrier protein.